The following is a 256-amino-acid chain: Ubiquinone/menaquinone biosynthesis C-methyltransferase UbiE (256 aa).

Positions 1-12 (MNDQRKGDHAEP) are enriched in basic and acidic residues. Residues 1–23 (MNDQRKGDHAEPTTHFGYQDVPE) are disordered. Residues Thr79, Asp100, and 128 to 129 (DA) each bind S-adenosyl-L-methionine.

Belongs to the class I-like SAM-binding methyltransferase superfamily. MenG/UbiE family.

The catalysed reaction is a 2-demethylmenaquinol + S-adenosyl-L-methionine = a menaquinol + S-adenosyl-L-homocysteine + H(+). It catalyses the reaction a 2-methoxy-6-(all-trans-polyprenyl)benzene-1,4-diol + S-adenosyl-L-methionine = a 5-methoxy-2-methyl-3-(all-trans-polyprenyl)benzene-1,4-diol + S-adenosyl-L-homocysteine + H(+). It participates in quinol/quinone metabolism; menaquinone biosynthesis; menaquinol from 1,4-dihydroxy-2-naphthoate: step 2/2. It functions in the pathway cofactor biosynthesis; ubiquinone biosynthesis. In terms of biological role, methyltransferase required for the conversion of demethylmenaquinol (DMKH2) to menaquinol (MKH2) and the conversion of 2-polyprenyl-6-methoxy-1,4-benzoquinol (DDMQH2) to 2-polyprenyl-3-methyl-6-methoxy-1,4-benzoquinol (DMQH2). The protein is Ubiquinone/menaquinone biosynthesis C-methyltransferase UbiE of Pseudomonas putida (strain ATCC 700007 / DSM 6899 / JCM 31910 / BCRC 17059 / LMG 24140 / F1).